The chain runs to 879 residues: JmjC domain-containing histone demethylation protein 1 (879 aa).

Disordered regions lie at residues 1-45 (MSEQ…EEGK), 117-212 (STSP…PKRK), and 407-449 (KDVK…EGLK). The segment at 23 to 116 (PEPCPLCRET…KWYCAPCLAR (94 aa)) adopts a PHD-type zinc-finger fold. Composition is skewed to basic and acidic residues over residues 183 to 192 (IDMKSEREQQ) and 407 to 433 (KDVKEKGRGNDSRESSEIRKEGSHLTE). The JmjC domain maps to 416–598 (NDSRESSEIR…TQLRLRQIEI (183 aa)). Residue Thr472 participates in substrate binding. Fe cation contacts are provided by His475 and Asp477. Lys492 provides a ligand contact to substrate. His566 contributes to the Fe cation binding site. A disordered region spans residues 763–879 (HPPAWSENRQ…KVEEDMDIDH (117 aa)). Residues 769–782 (ENRQSPQIETTTVQ) are compositionally biased toward polar residues. Over residues 786–818 (PSTSSSDAISGSGPGASPGASANGGANENEQAE) the composition is skewed to low complexity. The span at 848–864 (FVEKKTVWGPKLDKEKI) shows a compositional bias: basic and acidic residues.

The protein belongs to the JHDM1 histone demethylase family. Fe(2+) serves as cofactor.

It localises to the nucleus. The enzyme catalyses N(6),N(6)-dimethyl-L-lysyl(36)-[histone H3] + 2 2-oxoglutarate + 2 O2 = L-lysyl(36)-[histone H3] + 2 formaldehyde + 2 succinate + 2 CO2. Its function is as follows. Histone demethylase that specifically demethylates 'Lys-36' of histone H3, thereby playing a central role in histone code. This Cryptococcus neoformans var. neoformans serotype D (strain B-3501A) (Filobasidiella neoformans) protein is JmjC domain-containing histone demethylation protein 1 (JHD1).